The primary structure comprises 191 residues: Peptidyl-tRNA hydrolase (191 aa).

Tyrosine 15 serves as a coordination point for tRNA. Histidine 20 acts as the Proton acceptor in catalysis. The tRNA site is built by phenylalanine 66, asparagine 68, and asparagine 114.

It belongs to the PTH family. As to quaternary structure, monomer.

The protein resides in the cytoplasm. It catalyses the reaction an N-acyl-L-alpha-aminoacyl-tRNA + H2O = an N-acyl-L-amino acid + a tRNA + H(+). Hydrolyzes ribosome-free peptidyl-tRNAs (with 1 or more amino acids incorporated), which drop off the ribosome during protein synthesis, or as a result of ribosome stalling. In terms of biological role, catalyzes the release of premature peptidyl moieties from peptidyl-tRNA molecules trapped in stalled 50S ribosomal subunits, and thus maintains levels of free tRNAs and 50S ribosomes. The protein is Peptidyl-tRNA hydrolase of Streptococcus agalactiae serotype III (strain NEM316).